The following is a 334-amino-acid chain: Probable allantoicase (334 aa).

The protein belongs to the allantoicase family.

It carries out the reaction allantoate + H2O = (S)-ureidoglycolate + urea. The protein operates within nitrogen metabolism; (S)-allantoin degradation; (S)-ureidoglycolate from allantoate (aminidohydrolase route): step 1/1. This is Probable allantoicase from Acinetobacter baylyi (strain ATCC 33305 / BD413 / ADP1).